A 109-amino-acid chain; its full sequence is Short-chain dehydrogenase/reductase homolog YusS (109 aa).

It belongs to the short-chain dehydrogenases/reductases (SDR) family.

In Bacillus subtilis (strain 168), this protein is Short-chain dehydrogenase/reductase homolog YusS (yusS).